The chain runs to 339 residues: Anthranilate phosphoribosyltransferase (339 aa).

5-phospho-alpha-D-ribose 1-diphosphate contacts are provided by residues G80, 83–84, T88, 90–93, 108–116, and S120; these read GD, NIST, and KHGNRAMSS. G80 lines the anthranilate pocket. S92 contributes to the Mg(2+) binding site. N111 lines the anthranilate pocket. Residue R166 participates in anthranilate binding. 2 residues coordinate Mg(2+): D225 and E226.

The protein belongs to the anthranilate phosphoribosyltransferase family. As to quaternary structure, homodimer. It depends on Mg(2+) as a cofactor.

It carries out the reaction N-(5-phospho-beta-D-ribosyl)anthranilate + diphosphate = 5-phospho-alpha-D-ribose 1-diphosphate + anthranilate. Its pathway is amino-acid biosynthesis; L-tryptophan biosynthesis; L-tryptophan from chorismate: step 2/5. In terms of biological role, catalyzes the transfer of the phosphoribosyl group of 5-phosphorylribose-1-pyrophosphate (PRPP) to anthranilate to yield N-(5'-phosphoribosyl)-anthranilate (PRA). This is Anthranilate phosphoribosyltransferase from Chloroflexus aurantiacus (strain ATCC 29366 / DSM 635 / J-10-fl).